A 668-amino-acid chain; its full sequence is Exoribonuclease 2 (668 aa).

Residues 193–521 (RIEMTHVPFV…INHRMLKAVI (329 aa)) enclose the RNB domain. Residues 568 to 650 (QTCFTGEIFD…ENRSLVAKPT (83 aa)) enclose the S1 motif domain.

The protein belongs to the RNR ribonuclease family. RNase II subfamily.

It localises to the cytoplasm. It carries out the reaction Exonucleolytic cleavage in the 3'- to 5'-direction to yield nucleoside 5'-phosphates.. In terms of biological role, involved in mRNA degradation. Hydrolyzes single-stranded polyribonucleotides processively in the 3' to 5' direction. The polypeptide is Exoribonuclease 2 (Vibrio parahaemolyticus serotype O3:K6 (strain RIMD 2210633)).